Reading from the N-terminus, the 669-residue chain is DNA ligase (669 aa).

NAD(+) contacts are provided by residues 35-39, 84-85, and Glu114; these read DSEYD and SL. Lys116 functions as the N6-AMP-lysine intermediate in the catalytic mechanism. NAD(+)-binding residues include Arg137, Glu171, Lys287, and Lys311. 4 residues coordinate Zn(2+): Cys405, Cys408, Cys423, and Cys428. The 79-residue stretch at 591–669 folds into the BRCT domain; the sequence is DSDSYFAGKT…EAQLLGELKK (79 aa).

Belongs to the NAD-dependent DNA ligase family. LigA subfamily. Mg(2+) serves as cofactor. It depends on Mn(2+) as a cofactor.

It carries out the reaction NAD(+) + (deoxyribonucleotide)n-3'-hydroxyl + 5'-phospho-(deoxyribonucleotide)m = (deoxyribonucleotide)n+m + AMP + beta-nicotinamide D-nucleotide.. In terms of biological role, DNA ligase that catalyzes the formation of phosphodiester linkages between 5'-phosphoryl and 3'-hydroxyl groups in double-stranded DNA using NAD as a coenzyme and as the energy source for the reaction. It is essential for DNA replication and repair of damaged DNA. The polypeptide is DNA ligase (Bacillus velezensis (strain DSM 23117 / BGSC 10A6 / LMG 26770 / FZB42) (Bacillus amyloliquefaciens subsp. plantarum)).